Reading from the N-terminus, the 67-residue chain is Large ribosomal subunit protein uL30 (67 aa).

It belongs to the universal ribosomal protein uL30 family. Part of the 50S ribosomal subunit.

This is Large ribosomal subunit protein uL30 from Sorangium cellulosum (strain So ce56) (Polyangium cellulosum (strain So ce56)).